Reading from the N-terminus, the 524-residue chain is Apoptosis inhibitor 5-A (524 aa).

The tract at residues 1–360 (MATVEELYRS…HQLGRKLPDF (360 aa)) is ARM-like and Heat-like helical repeats. A disordered region spans residues 440 to 524 (TLSWKPVQRT…RGNRSRGRIY (85 aa)). The Nuclear localization signal motif lies at 455 to 476 (KRTSDETSSTSPPKKPIVGPKR). The segment covering 503–516 (GFQGGRGRGWGGRG) has biased composition (gly residues).

Belongs to the API5 family. Monomer.

The protein localises to the nucleus. May be an antiapoptotic factor. This Xenopus laevis (African clawed frog) protein is Apoptosis inhibitor 5-A (api5-a).